Consider the following 130-residue polypeptide: DNA-directed RNA polymerase subunit omega (130 aa).

Residues 110 to 130 (EELLKGLEGLAPPEEQPEEDE) are disordered.

The protein belongs to the RNA polymerase subunit omega family. In terms of assembly, the RNAP catalytic core consists of 2 alpha, 1 beta, 1 beta' and 1 omega subunit. When a sigma factor is associated with the core the holoenzyme is formed, which can initiate transcription.

The enzyme catalyses RNA(n) + a ribonucleoside 5'-triphosphate = RNA(n+1) + diphosphate. Promotes RNA polymerase assembly. Latches the N- and C-terminal regions of the beta' subunit thereby facilitating its interaction with the beta and alpha subunits. The sequence is that of DNA-directed RNA polymerase subunit omega from Rhodopseudomonas palustris (strain HaA2).